The chain runs to 762 residues: Phosphoribosylformylglycinamidine synthase subunit PurL (762 aa).

The active site involves His-58. ATP is bound by residues Tyr-61 and Lys-105. Residue Glu-107 participates in Mg(2+) binding. Residues 108-111 (SHNH) and Arg-130 contribute to the substrate site. Catalysis depends on His-109, which acts as the Proton acceptor. Asp-131 contacts Mg(2+). Residue Gln-260 participates in substrate binding. Mg(2+) is bound at residue Asp-288. Substrate is bound at residue 332–334 (ESQ). The ATP site is built by Asn-520 and Gly-557. A Mg(2+)-binding site is contributed by Asn-558. Residue Ser-560 participates in substrate binding.

This sequence belongs to the FGAMS family. In terms of assembly, monomer. Part of the FGAM synthase complex composed of 1 PurL, 1 PurQ and 2 PurS subunits.

Its subcellular location is the cytoplasm. It catalyses the reaction N(2)-formyl-N(1)-(5-phospho-beta-D-ribosyl)glycinamide + L-glutamine + ATP + H2O = 2-formamido-N(1)-(5-O-phospho-beta-D-ribosyl)acetamidine + L-glutamate + ADP + phosphate + H(+). It participates in purine metabolism; IMP biosynthesis via de novo pathway; 5-amino-1-(5-phospho-D-ribosyl)imidazole from N(2)-formyl-N(1)-(5-phospho-D-ribosyl)glycinamide: step 1/2. Functionally, part of the phosphoribosylformylglycinamidine synthase complex involved in the purines biosynthetic pathway. Catalyzes the ATP-dependent conversion of formylglycinamide ribonucleotide (FGAR) and glutamine to yield formylglycinamidine ribonucleotide (FGAM) and glutamate. The FGAM synthase complex is composed of three subunits. PurQ produces an ammonia molecule by converting glutamine to glutamate. PurL transfers the ammonia molecule to FGAR to form FGAM in an ATP-dependent manner. PurS interacts with PurQ and PurL and is thought to assist in the transfer of the ammonia molecule from PurQ to PurL. This Rhodococcus erythropolis (strain PR4 / NBRC 100887) protein is Phosphoribosylformylglycinamidine synthase subunit PurL.